Consider the following 296-residue polypeptide: Phosphoribosylaminoimidazole-succinocarboxamide synthase (296 aa).

The protein belongs to the SAICAR synthetase family.

The enzyme catalyses 5-amino-1-(5-phospho-D-ribosyl)imidazole-4-carboxylate + L-aspartate + ATP = (2S)-2-[5-amino-1-(5-phospho-beta-D-ribosyl)imidazole-4-carboxamido]succinate + ADP + phosphate + 2 H(+). It functions in the pathway purine metabolism; IMP biosynthesis via de novo pathway; 5-amino-1-(5-phospho-D-ribosyl)imidazole-4-carboxamide from 5-amino-1-(5-phospho-D-ribosyl)imidazole-4-carboxylate: step 1/2. The protein is Phosphoribosylaminoimidazole-succinocarboxamide synthase of Lachnospira eligens (strain ATCC 27750 / DSM 3376 / VPI C15-48 / C15-B4) (Eubacterium eligens).